The chain runs to 534 residues: ATP synthase subunit beta 2 (534 aa).

185-192 is an ATP binding site; that stretch reads GGAGVGKT. Residues 494-505 are compositionally biased toward basic and acidic residues; the sequence is AAAREADARREA. The disordered stretch occupies residues 494-534; sequence AAAREADARREAAAAASGAGPGTTSDPASGSAEPQGARHGR.

It belongs to the ATPase alpha/beta chains family. In terms of assembly, F-type ATPases have 2 components, CF(1) - the catalytic core - and CF(0) - the membrane proton channel. CF(1) has five subunits: alpha(3), beta(3), gamma(1), delta(1), epsilon(1). CF(0) has three main subunits: a(1), b(2) and c(9-12). The alpha and beta chains form an alternating ring which encloses part of the gamma chain. CF(1) is attached to CF(0) by a central stalk formed by the gamma and epsilon chains, while a peripheral stalk is formed by the delta and b chains.

Its subcellular location is the cell inner membrane. The enzyme catalyses ATP + H2O + 4 H(+)(in) = ADP + phosphate + 5 H(+)(out). Its function is as follows. Produces ATP from ADP in the presence of a proton gradient across the membrane. The catalytic sites are hosted primarily by the beta subunits. The polypeptide is ATP synthase subunit beta 2 (Burkholderia mallei (strain NCTC 10247)).